A 454-amino-acid polypeptide reads, in one-letter code: GTPase Obg (454 aa).

An Obg domain is found at 2-159 (SDFVDEAVLH…VDIRLELKTI (158 aa)). The tract at residues 60-87 (YQRRPHRKAENGAPGQGSNRSGASGADL) is disordered. An OBG-type G domain is found at 160–335 (ADVGLVGFPS…LAYALGEQVA (176 aa)). Residues 166–173 (GFPSAGKS), 191–195 (FTTLV), 212–215 (DVPG), 287–290 (NKID), and 316–318 (SAA) each bind GTP. Mg(2+)-binding residues include S173 and T193. The 83-residue stretch at 353–435 (PREIGEIPFQ…DNPVVFDWDP (83 aa)) folds into the OCT domain.

This sequence belongs to the TRAFAC class OBG-HflX-like GTPase superfamily. OBG GTPase family. As to quaternary structure, monomer. It depends on Mg(2+) as a cofactor.

It is found in the cytoplasm. In terms of biological role, an essential GTPase which binds GTP, GDP and possibly (p)ppGpp with moderate affinity, with high nucleotide exchange rates and a fairly low GTP hydrolysis rate. Plays a role in control of the cell cycle, stress response, ribosome biogenesis and in those bacteria that undergo differentiation, in morphogenesis control. The sequence is that of GTPase Obg from Thermobifida fusca (strain YX).